Consider the following 117-residue polypeptide: UPF0102 protein Swoo_0351 (117 aa).

This sequence belongs to the UPF0102 family.

In Shewanella woodyi (strain ATCC 51908 / MS32), this protein is UPF0102 protein Swoo_0351.